Here is a 165-residue protein sequence, read N- to C-terminus: Cathelicidin-7 (165 aa).

Residues 1–29 (METQRASFSLGRSSLWLLLLGLVVPSASA) form the signal peptide. Positions 30–130 (QDLSYREAVL…FDITCNNIQS (101 aa)) are excised as a propeptide. 2 cysteine pairs are disulfide-bonded: cysteine 86-cysteine 97 and cysteine 108-cysteine 125. Arginine 164 is modified (arginine amide).

This sequence belongs to the cathelicidin family. Expressed in bone marrow myeloid cells, spleen and testis.

The protein resides in the secreted. Its function is as follows. Exerts a potent antimicrobial activity. The protein is Cathelicidin-7 (CATHL7) of Bos taurus (Bovine).